The primary structure comprises 85 residues: Small ribosomal subunit protein bS18 (85 aa).

The protein belongs to the bacterial ribosomal protein bS18 family. In terms of assembly, part of the 30S ribosomal subunit. Forms a tight heterodimer with protein bS6.

Functionally, binds as a heterodimer with protein bS6 to the central domain of the 16S rRNA, where it helps stabilize the platform of the 30S subunit. The chain is Small ribosomal subunit protein bS18 from Helicobacter acinonychis (strain Sheeba).